A 47-amino-acid chain; its full sequence is Potassium channel toxin alpha-KTx 7.1 (47 aa).

An N-terminal signal peptide occupies residues 1–12 (RGSVDYKDDDDK). 3 disulfides stabilise this stretch: Cys16–Cys37, Cys22–Cys42, and Cys26–Cys44.

This sequence belongs to the short scorpion toxin superfamily. Potassium channel inhibitor family. Alpha-KTx 07 subfamily. In terms of tissue distribution, expressed by the venom gland.

Its subcellular location is the secreted. In terms of biological role, potent inhibitor of the A-type voltage-gated potassium channels. Most potent inhibitor of Kv1.2/KCNA2 channels. Reversibly block the Shaker B potassium-channels (Kv1.1 sub-family). The sequence is that of Potassium channel toxin alpha-KTx 7.1 (PTX-1) from Pandinus imperator (Emperor scorpion).